The primary structure comprises 149 residues: UPF0208 membrane protein PBPRA2797 (149 aa).

The next 2 membrane-spanning stretches (helical) occupy residues 41–60 (FATRVMPAVAVMSVLSQMAF) and 65–87 (ALPQAMTVALFALTMPLQGLWWL).

It belongs to the UPF0208 family.

The protein resides in the cell inner membrane. The chain is UPF0208 membrane protein PBPRA2797 from Photobacterium profundum (strain SS9).